Consider the following 256-residue polypeptide: Hydroxyacylglutathione hydrolase (256 aa).

Residues histidine 53, histidine 55, aspartate 57, histidine 58, histidine 111, aspartate 128, and histidine 166 each coordinate Zn(2+).

The protein belongs to the metallo-beta-lactamase superfamily. Glyoxalase II family. As to quaternary structure, monomer. Zn(2+) is required as a cofactor.

The enzyme catalyses an S-(2-hydroxyacyl)glutathione + H2O = a 2-hydroxy carboxylate + glutathione + H(+). It functions in the pathway secondary metabolite metabolism; methylglyoxal degradation; (R)-lactate from methylglyoxal: step 2/2. Functionally, thiolesterase that catalyzes the hydrolysis of S-D-lactoyl-glutathione to form glutathione and D-lactic acid. The chain is Hydroxyacylglutathione hydrolase from Thiobacillus denitrificans (strain ATCC 25259 / T1).